Consider the following 515-residue polypeptide: Anthranilate synthase component 1 (515 aa).

L-tryptophan-binding positions include threonine 40 and 291–293 (PYM). 328-329 (GT) contributes to the chorismate binding site. Glutamate 361 contributes to the Mg(2+) binding site. Chorismate contacts are provided by residues tyrosine 449, arginine 469, 483–485 (GAG), and glycine 485. Position 498 (glutamate 498) interacts with Mg(2+).

This sequence belongs to the anthranilate synthase component I family. Heterotetramer consisting of two non-identical subunits: a beta subunit (TrpG) and a large alpha subunit (TrpE). Mg(2+) serves as cofactor.

It catalyses the reaction chorismate + L-glutamine = anthranilate + pyruvate + L-glutamate + H(+). The protein operates within amino-acid biosynthesis; L-tryptophan biosynthesis; L-tryptophan from chorismate: step 1/5. Its activity is regulated as follows. Feedback inhibited by tryptophan. Its function is as follows. Part of a heterotetrameric complex that catalyzes the two-step biosynthesis of anthranilate, an intermediate in the biosynthesis of L-tryptophan. In the first step, the glutamine-binding beta subunit (TrpG) of anthranilate synthase (AS) provides the glutamine amidotransferase activity which generates ammonia as a substrate that, along with chorismate, is used in the second step, catalyzed by the large alpha subunit of AS (TrpE) to produce anthranilate. In the absence of TrpG, TrpE can synthesize anthranilate directly from chorismate and high concentrations of ammonia. This is Anthranilate synthase component 1 (trpE) from Buchnera aphidicola subsp. Schizaphis graminum (strain Sg).